Reading from the N-terminus, the 521-residue chain is Zinc finger protein GLIS2 (521 aa).

Positions 35–174 are interaction with CTNND1; the sequence is ALHRELGLVD…AKQLVCRWAK (140 aa). 2 disordered regions span residues 41–63 and 84–110; these read GLVDDSPAPGSPGSPPPGFLLNP and SPPSGLDSPNGSSSLSPECQGNGDLPP. The span at 49–58 shows a compositional bias: pro residues; that stretch reads PGSPGSPPPG. The transcription activation stretch occupies residues 71 to 137; that stretch reads GRFSAAPLVD…SSFQFFLPLG (67 aa). A compositionally biased stretch (low complexity) spans 84–100; that stretch reads SPPSGLDSPNGSSSLSP. Residues 148-171 form a transcription repression region; it reads SFLPPPKDKCLSPELPLAKQLVCR. Residues 168-193 form a C2H2-type 1 zinc finger; the sequence is LVCRWAKCNQLFELLQDLVDHVNDHH. A C2H2-type 2; atypical zinc finger spans residues 202–229; sequence YCCHWEGCARHGRGFNARYKMLIHIRTH. 3 consecutive C2H2-type zinc fingers follow at residues 235-257, 263-287, and 293-317; these read HRCPTCNKSFSRLENLKIHNRSH, YVCPYEGCNKRYSNSSDRFKHTRTH, and YYCKMPGCHKRYTDPSSLRKHIKAH. A disordered region spans residues 436–501; it reads AGSKAEGEKG…NSAASSPEVL (66 aa). Basic and acidic residues predominate over residues 455–470; sequence GLEDHKTPLERTERSR. Over residues 487-496 the composition is skewed to polar residues; the sequence is DLSTGNSAAS.

The protein belongs to the GLI C2H2-type zinc-finger protein family. In terms of assembly, interacts with CTBP1 and HDAC3. Interacts with CTNNB1 and CTNND1. Interacts with SUFU. C-terminus cleavage is induced by interaction with CTNND1 and enhances by Src tyrosine kinase. In terms of tissue distribution, expressed at high levels in kidney, and at lower levels in heart and lung.

The protein localises to the nucleus speckle. Its subcellular location is the cytoplasm. In terms of biological role, can act either as a transcriptional repressor or as a transcriptional activator, depending on the cell context. Acts as a repressor of the Hedgehog signaling pathway. Represses the Hedgehog-dependent expression of Wnt4. Necessary to maintain the differentiated epithelial phenotype in renal cells through the inhibition of SNAI1, which itself induces the epithelial-to-mesenchymal transition. Represses transcriptional activation by CTNNB1 in the Wnt signaling pathway. May act by recruiting the corepressors CTBP1 and HDAC3. May be involved in neuron differentiation. The polypeptide is Zinc finger protein GLIS2 (Glis2) (Mus musculus (Mouse)).